Here is a 106-residue protein sequence, read N- to C-terminus: V-type proton ATPase subunit G2 (106 aa).

Met-1 is modified (N-acetylmethionine). Residues 31-67 (LKQAKEEAETEVAEHKTSTEQGFQRKLEATSGDSGAN) are disordered. Over residues 33 to 58 (QAKEEAETEVAEHKTSTEQGFQRKLE) the composition is skewed to basic and acidic residues.

Belongs to the V-ATPase G subunit family. In terms of assembly, V-ATPase is a heteromultimeric enzyme composed of a peripheral catalytic V1 complex (components A to H) attached to an integral membrane V0 proton pore complex (components: a, c, c'', d and e).

The protein resides in the vacuole membrane. In terms of biological role, catalytic subunit of the peripheral V1 complex of vacuolar ATPase (V-ATPase). V-ATPase is responsible for acidifying a variety of intracellular compartments in eukaryotic cells. The chain is V-type proton ATPase subunit G2 (VHA-G2) from Arabidopsis thaliana (Mouse-ear cress).